A 217-amino-acid polypeptide reads, in one-letter code: UPF0319 protein VP1009 (217 aa).

Positions 1 to 21 (MRLKTWIVAFFLGLFGTTVNA) are cleaved as a signal peptide.

The protein belongs to the UPF0319 family.

The polypeptide is UPF0319 protein VP1009 (Vibrio parahaemolyticus serotype O3:K6 (strain RIMD 2210633)).